The primary structure comprises 283 residues: Acetyl-coenzyme A carboxylase carboxyl transferase subunit beta (283 aa).

The CoA carboxyltransferase N-terminal domain maps to 29–283 (LWVACPKCQQ…LKLHERGAHY (255 aa)). Positions 33, 36, 51, and 54 each coordinate Zn(2+). The segment at 33 to 54 (CPKCQQSIYHKDLGYYRTCPVC) adopts a C4-type zinc-finger fold.

The protein belongs to the AccD/PCCB family. Acetyl-CoA carboxylase is a heterohexamer composed of biotin carboxyl carrier protein (AccB), biotin carboxylase (AccC) and two subunits each of ACCase subunit alpha (AccA) and ACCase subunit beta (AccD). Zn(2+) is required as a cofactor.

Its subcellular location is the cytoplasm. The enzyme catalyses N(6)-carboxybiotinyl-L-lysyl-[protein] + acetyl-CoA = N(6)-biotinyl-L-lysyl-[protein] + malonyl-CoA. The protein operates within lipid metabolism; malonyl-CoA biosynthesis; malonyl-CoA from acetyl-CoA: step 1/1. Component of the acetyl coenzyme A carboxylase (ACC) complex. Biotin carboxylase (BC) catalyzes the carboxylation of biotin on its carrier protein (BCCP) and then the CO(2) group is transferred by the transcarboxylase to acetyl-CoA to form malonyl-CoA. This is Acetyl-coenzyme A carboxylase carboxyl transferase subunit beta from Latilactobacillus sakei subsp. sakei (strain 23K) (Lactobacillus sakei subsp. sakei).